Here is a 97-residue protein sequence, read N- to C-terminus: Small ribosomal subunit protein bS20 (97 aa).

Belongs to the bacterial ribosomal protein bS20 family.

Functionally, binds directly to 16S ribosomal RNA. This Prochlorococcus marinus (strain MIT 9515) protein is Small ribosomal subunit protein bS20.